We begin with the raw amino-acid sequence, 279 residues long: Non-structural maintenance of chromosomes element 3 homolog (279 aa).

The interval M1–G52 is disordered. A compositionally biased stretch (low complexity) spans S30 to A48. A Phosphoserine modification is found at S38. The interval G52–S279 is interaction with NSMCE1. Positions L59–A259 constitute an MAGE domain.

Component of the SMC5-SMC6 complex which consists at least of SMC5, SMC6, NSMCE2, NSMCE1, NSMCE4A or EID3 and NSMCE3. NSMCE1, NSMCE4A or EID3 and NSMCE3 probably form a subcomplex that bridges the head domains of the SMC5:SMC6 heterodimer. Interacts with PJA1. Interacts with E2F1 (via C-terminus). Interacts with NGFR (via C-terminus). Interacts with NSMCE1. Interacts with NSMCE4. Interacts with SMC6. Interacts with EID3. Ubiquitous.

Its subcellular location is the cytoplasm. The protein localises to the nucleus. The protein resides in the chromosome. It is found in the telomere. In terms of biological role, component of the SMC5-SMC6 complex, a complex involved in repair of DNA double-strand breaks by homologous recombination. The complex may promote sister chromatid homologous recombination by recruiting the SMC1-SMC3 cohesin complex to double-strand breaks. The complex is required for telomere maintenance via recombination in ALT (alternative lengthening of telomeres) cell lines and mediates sumoylation of shelterin complex (telosome) components which is proposed to lead to shelterin complex disassembly in ALT-associated PML bodies (APBs). In vitro enhances ubiquitin ligase activity of NSMCE1. Proposed to act through recruitment and/or stabilization of the Ubl-conjugating enzyme (E2) at the E3:substrate complex. May be a growth suppressor that facilitates the entry of the cell into cell cycle arrest. In Mus musculus (Mouse), this protein is Non-structural maintenance of chromosomes element 3 homolog (Nsmce3).